A 120-amino-acid polypeptide reads, in one-letter code: Large ribosomal subunit protein uL18 (120 aa).

This sequence belongs to the universal ribosomal protein uL18 family. As to quaternary structure, part of the 50S ribosomal subunit; part of the 5S rRNA/L5/L18/L25 subcomplex. Contacts the 5S and 23S rRNAs.

This is one of the proteins that bind and probably mediate the attachment of the 5S RNA into the large ribosomal subunit, where it forms part of the central protuberance. The polypeptide is Large ribosomal subunit protein uL18 (Brevibacillus brevis (strain 47 / JCM 6285 / NBRC 100599)).